The primary structure comprises 808 residues: MTCVLLKAVVESDERADLRQFSRILQLGEKRYLLRNDILDAFADYCRDQERPVPPPSESRLSKLVFYTQEIIVDNESLCWIVRPRIAQQEVCRLLVEDLTIVPMTIPELLDLRDRLVNHYHPNEGDVFEIDVQPFYDYSPIIRDAKNIGKGVEFLNRYLSSKLFQDPRQWQQNLFNFLRIHRYNGYQLLINERIRSPQHLSEQVKQALVVLSDRPPTEAYSEFRFELQNLGFEPGWGNTVARVRDTLEILDQLLDSPDHQVLEAFVSRIPMLFRIALISPHGWFGQEGVLGRPDTGGQVVYILDQVKSLEKQMREDLELAGLGVLEAQPKIIVLTRLIPNAEGTLCNQRLEKIYGTNDAWILRVPFREFNPKVTQNWISRFEIWPYLETFAIDAERELRAEFGHVPDLIIGNYSDGNLVAFLLARRLKVTQCNIAHALEKSKYLFSNLYWQDLEDKYHFSLQFTADLIAMNAANFIISSTYQEIVGTPDSIGQYESYQSFTMPDLYHVVNGIELFSPKFNVVPPGVNEQVYFPYYHYTERLEGDRQRLEELLFTLEDPQQIYGYLEAPEKRPLFSMARLDRIKNLTGLAEAFGRSKALQERCNLILVAGKLRTADSSDREEIAEIEKLYQIIHQYNLHGKIRWLGIRLPKADSGEIYRIIADRQGIFVQPALFEAFGLTILEAMISGLPTFGTRFGGPLEIIQDGVNGFYINPTHLEEMAETIVRFLEACDRDPQEWQRISKAGIERVYSTYTWKIHCTRLLSLAKIYGFWNFSSQENREDMMRYMEALFHLLYKPRAQALLAEHLQR.

Positions 271 to 753 (MLFRIALISP…GIERVYSTYT (483 aa)) are GT-B glycosyltransferase.

This sequence belongs to the glycosyltransferase 1 family. Probably a homotetramer.

It carries out the reaction an NDP-alpha-D-glucose + D-fructose = a ribonucleoside 5'-diphosphate + sucrose + H(+). The enzyme catalyses ADP-alpha-D-glucose + D-fructose = sucrose + ADP + H(+). In terms of biological role, catalyzes the reversible conversion of sucrose and a nucleotide disphosphate (NDP) into fructose and NDP-glucose; although the reaction is freely reversible in vitro, the physiological reaction seems to be sucrose cleavage. Unlike characterized plant enzymes prefers ADP as a cosubstrate, whereas plants prefer UDP. Its preference for ADP over UDP suggests it may directly link sucrose and glycogen metabolism. The chain is Sucrose synthase from Thermosynechococcus vestitus (strain NIES-2133 / IAM M-273 / BP-1).